We begin with the raw amino-acid sequence, 572 residues long: Phosphoenolpyruvate-protein phosphotransferase (572 aa).

The active-site Tele-phosphohistidine intermediate is His191. Phosphoenolpyruvate-binding residues include Arg298 and Arg334. Residues Glu433 and Asp457 each coordinate Mg(2+). Phosphoenolpyruvate contacts are provided by residues 456 to 457 (ND) and Arg467. Cys504 acts as the Proton donor in catalysis.

The protein belongs to the PEP-utilizing enzyme family. In terms of assembly, homodimer. Mg(2+) serves as cofactor.

It localises to the cytoplasm. The enzyme catalyses L-histidyl-[protein] + phosphoenolpyruvate = N(pros)-phospho-L-histidyl-[protein] + pyruvate. General (non sugar-specific) component of the phosphoenolpyruvate-dependent sugar phosphotransferase system (sugar PTS). This major carbohydrate active-transport system catalyzes the phosphorylation of incoming sugar substrates concomitantly with their translocation across the cell membrane. Enzyme I transfers the phosphoryl group from phosphoenolpyruvate (PEP) to the phosphoryl carrier protein (HPr). This chain is Phosphoenolpyruvate-protein phosphotransferase (ptsI), found in Staphylococcus aureus (strain Mu50 / ATCC 700699).